The chain runs to 204 residues: Phosphoribosyl-dephospho-CoA transferase (204 aa).

Catalysis depends on residues Asp129 and Asp131.

The protein belongs to the MdcG family.

It catalyses the reaction apo-[malonate decarboxylase ACP] + 2'-(5''-triphospho-alpha-D-ribosyl)-3'-dephospho-CoA = holo-[malonate decarboxylase ACP] + diphosphate. Transfers 2'-(5-triphosphoribosyl)-3'-dephosphocoenzyme-A to the apo-[acyl-carrier-protein] of the malonate decarboxylase to yield holo-[acyl-carrier-protein]. This is Phosphoribosyl-dephospho-CoA transferase from Pseudomonas putida (strain GB-1).